Consider the following 1082-residue polypeptide: Integrator complex subunit 3 homolog (1082 aa).

Disordered regions lie at residues 483–563 (PGPP…VSDD), 923–945 (YPSNSPNKRKRPSKSAQQNTAPT), and 1005–1082 (DETS…SDSD). Low complexity-rich tracts occupy residues 517–528 (PAAKAASTAASA) and 542–555 (TKPATTTTTTTTTT). Polar residues predominate over residues 936 to 945 (KSAQQNTAPT). Low complexity-rich tracts occupy residues 1008–1018 (STTVGRRGTSS) and 1033–1056 (EKAAAAAAAAHANNSKKAAEASAK).

This sequence belongs to the Integrator subunit 3 family. As to quaternary structure, belongs to the multiprotein complex Integrator. The core complex associates with protein phosphatase 2A subunits, to form the Integrator-PP2A (INTAC) complex.

The protein resides in the nucleus. It localises to the cytoplasm. Functionally, component of the integrator complex, a multiprotein complex that terminates RNA polymerase II (Pol II) transcription in the promoter-proximal region of genes. The integrator complex provides a quality checkpoint during transcription elongation by driving premature transcription termination of transcripts that are unfavorably configured for transcriptional elongation: the complex terminates transcription by (1) catalyzing dephosphorylation of the C-terminal domain (CTD) of Pol II subunit Polr2A/Rbp1 and Spt5, and (2) degrading the exiting nascent RNA transcript via endonuclease activity. The integrator complex is also involved in the 3'-end processing of the U7 snRNA, and also the spliceosomal snRNAs U1, U2, U4 and U5. In Anopheles gambiae (African malaria mosquito), this protein is Integrator complex subunit 3 homolog.